The primary structure comprises 437 residues: GTPase Obg (437 aa).

Positions 2 to 160 (SMFLDTAKIS…RQLELELKIL (159 aa)) constitute an Obg domain. The 178-residue stretch at 161-338 (ADVGLVGFPS…LLEATAELLA (178 aa)) folds into the OBG-type G domain. GTP-binding positions include 167-174 (GFPSVGKS), 192-196 (FTTIV), 214-217 (DLPG), 284-287 (NKMD), and 319-321 (SSL). Positions 174 and 194 each coordinate Mg(2+). The 79-residue stretch at 359–437 (GFAEAEKDFE…IGKFEFEFVD (79 aa)) folds into the OCT domain.

The protein belongs to the TRAFAC class OBG-HflX-like GTPase superfamily. OBG GTPase family. In terms of assembly, monomer. The cofactor is Mg(2+).

The protein localises to the cytoplasm. Its function is as follows. An essential GTPase which binds GTP, GDP and possibly (p)ppGpp with moderate affinity, with high nucleotide exchange rates and a fairly low GTP hydrolysis rate. Plays a role in control of the cell cycle, stress response, ribosome biogenesis and in those bacteria that undergo differentiation, in morphogenesis control. This chain is GTPase Obg, found in Streptococcus pyogenes serotype M18 (strain MGAS8232).